The sequence spans 149 residues: Antitoxin HigA1 (149 aa).

The HTH cro/C1-type domain maps to Leu42–Val96. Positions Gln53–Lys72 form a DNA-binding region, H-T-H motif.

In terms of assembly, interacts with SecB-like chaperone MT2006.

Functionally, antitoxin component of an atypical, type II toxin-antitoxin chaperone (TAC) system. Probably neutralizes the toxic effects of cognate toxin HigB1, which also requires SecB-like chaperone MT2006 (AC Q7D7P7). Autorepresses its operon (higB1-higA1-MT2006). The polypeptide is Antitoxin HigA1 (Mycobacterium tuberculosis (strain CDC 1551 / Oshkosh)).